Here is a 454-residue protein sequence, read N- to C-terminus: Putative tyrosine kinase 36 (454 aa).

Residues 80-88 and K98 each bind ATP; that span reads LGSGSFGKV. Residue D192 is the Proton acceptor of the active site.

This sequence belongs to the protein kinase superfamily. Tyr protein kinase family.

The catalysed reaction is L-tyrosyl-[protein] + ATP = O-phospho-L-tyrosyl-[protein] + ADP + H(+). In Alcelaphine herpesvirus 1 (strain C500) (AlHV-1), this protein is Putative tyrosine kinase 36 (36).